Consider the following 299-residue polypeptide: MATH domain and coiled-coil domain-containing protein At2g42460 (299 aa).

One can recognise an MATH domain in the interval 7-130 (QKTFTWKIEN…NNTLFIEVYI (124 aa)). Residues 225-262 (FRVKWLKSKLDEISLARKKKVDADAARVQELEGKVKNQ) are a coiled coil.

The chain is MATH domain and coiled-coil domain-containing protein At2g42460 from Arabidopsis thaliana (Mouse-ear cress).